Here is a 312-residue protein sequence, read N- to C-terminus: tRNA uridine(34) hydroxylase (312 aa).

The 96-residue stretch at 130-225 (RGDDVVFFDG…YGEKYGNDGL (96 aa)) folds into the Rhodanese domain. Catalysis depends on C185, which acts as the Cysteine persulfide intermediate.

It belongs to the TrhO family.

The enzyme catalyses uridine(34) in tRNA + AH2 + O2 = 5-hydroxyuridine(34) in tRNA + A + H2O. Catalyzes oxygen-dependent 5-hydroxyuridine (ho5U) modification at position 34 in tRNAs. This Corynebacterium diphtheriae (strain ATCC 700971 / NCTC 13129 / Biotype gravis) protein is tRNA uridine(34) hydroxylase.